Here is a 207-residue protein sequence, read N- to C-terminus: Cytochrome c biogenesis ATP-binding export protein CcmA (207 aa).

The region spanning 6–207 (LCAEGLECIR…RGDCRSLNLS (202 aa)) is the ABC transporter domain. 38–45 (GANGAGKT) serves as a coordination point for ATP.

Belongs to the ABC transporter superfamily. CcmA exporter (TC 3.A.1.107) family. As to quaternary structure, the complex is composed of two ATP-binding proteins (CcmA) and two transmembrane proteins (CcmB).

The protein localises to the cell inner membrane. The enzyme catalyses heme b(in) + ATP + H2O = heme b(out) + ADP + phosphate + H(+). In terms of biological role, part of the ABC transporter complex CcmAB involved in the biogenesis of c-type cytochromes; once thought to export heme, this seems not to be the case, but its exact role is uncertain. Responsible for energy coupling to the transport system. This Methylococcus capsulatus (strain ATCC 33009 / NCIMB 11132 / Bath) protein is Cytochrome c biogenesis ATP-binding export protein CcmA.